We begin with the raw amino-acid sequence, 146 residues long: Acidic phospholipase A2 2 (146 aa).

Residues 1-21 (MTPAHLLILAAVCVSPLGASS) form the signal peptide. Positions 22–27 (SRPMPL) are excised as a propeptide. 7 disulfide bridges follow: Cys-38–Cys-98, Cys-53–Cys-145, Cys-55–Cys-71, Cys-70–Cys-126, Cys-77–Cys-119, Cys-87–Cys-112, and Cys-105–Cys-117. Ca(2+) is bound by residues Tyr-54, Gly-56, and Gly-58. His-74 is a catalytic residue. Asp-75 serves as a coordination point for Ca(2+). Asp-120 is an active-site residue.

The protein belongs to the phospholipase A2 family. Group I subfamily. D49 sub-subfamily. Requires Ca(2+) as cofactor. In terms of tissue distribution, expressed by the venom gland.

It localises to the secreted. The catalysed reaction is a 1,2-diacyl-sn-glycero-3-phosphocholine + H2O = a 1-acyl-sn-glycero-3-phosphocholine + a fatty acid + H(+). Functionally, PLA2 catalyzes the calcium-dependent hydrolysis of the 2-acyl groups in 3-sn-phosphoglycerides. The sequence is that of Acidic phospholipase A2 2 from Naja atra (Chinese cobra).